The primary structure comprises 282 residues: Undecaprenyl-diphosphatase (282 aa).

7 helical membrane-spanning segments follow: residues 6–26 (LYFV…FIPV), 45–65 (SGKV…MWIF), 85–105 (LFTR…AIFI), 112–132 (FYHP…MLWV), 200–220 (ATEF…VYDM), 230–250 (HDLG…LLVV), and 262–282 (YRGF…WLAF).

Belongs to the UppP family.

Its subcellular location is the cell inner membrane. It carries out the reaction di-trans,octa-cis-undecaprenyl diphosphate + H2O = di-trans,octa-cis-undecaprenyl phosphate + phosphate + H(+). Catalyzes the dephosphorylation of undecaprenyl diphosphate (UPP). Confers resistance to bacitracin. In Bordetella avium (strain 197N), this protein is Undecaprenyl-diphosphatase.